A 571-amino-acid polypeptide reads, in one-letter code: Urease subunit alpha (571 aa).

Positions 134 to 571 (GAIDTHIHFI…LPMAQRYFLF (438 aa)) constitute a Urease domain. The Ni(2+) site is built by His-139, His-141, and Lys-222. Residue Lys-222 is modified to N6-carboxylysine. His-224 serves as a coordination point for substrate. Residues His-251 and His-277 each contribute to the Ni(2+) site. His-325 acts as the Proton donor in catalysis. Asp-365 serves as a coordination point for Ni(2+).

The protein belongs to the metallo-dependent hydrolases superfamily. Urease alpha subunit family. As to quaternary structure, heterotrimer of UreA (gamma), UreB (beta) and UreC (alpha) subunits. Three heterotrimers associate to form the active enzyme. Ni cation serves as cofactor. In terms of processing, carboxylation allows a single lysine to coordinate two nickel ions.

Its subcellular location is the cytoplasm. The catalysed reaction is urea + 2 H2O + H(+) = hydrogencarbonate + 2 NH4(+). It functions in the pathway nitrogen metabolism; urea degradation; CO(2) and NH(3) from urea (urease route): step 1/1. The polypeptide is Urease subunit alpha (Bordetella pertussis (strain Tohama I / ATCC BAA-589 / NCTC 13251)).